Reading from the N-terminus, the 467-residue chain is Argininosuccinate lyase (467 aa).

It belongs to the lyase 1 family. Argininosuccinate lyase subfamily.

It is found in the cytoplasm. The enzyme catalyses 2-(N(omega)-L-arginino)succinate = fumarate + L-arginine. The protein operates within amino-acid biosynthesis; L-arginine biosynthesis; L-arginine from L-ornithine and carbamoyl phosphate: step 3/3. This Anaeromyxobacter dehalogenans (strain 2CP-C) protein is Argininosuccinate lyase.